The primary structure comprises 106 residues: Serine rich endogenous peptide 7 (106 aa).

The N-terminal stretch at 1–26 (MGKKCSSKFRQMLVLVLLLIVFTCLS) is a signal peptide. 2 stretches are compositionally biased toward basic and acidic residues: residues 46–56 (GIEDEGQERTH) and 65–77 (RSVE…EGRR). The interval 46-106 (GIEDEGQERT…GGGRIPVAAS (61 aa)) is disordered. 2 short sequence motifs (SCOOP motif) span residues 58–72 (LNSK…KTHH) and 86–100 (GIRA…GGGR). 2 consecutive short sequence motifs (sxS motif essential for MIK2 binding) follow at residues 64–66 (SRS) and 92–94 (SKS).

This sequence belongs to the serine rich endogenous peptide (SCOOP) phytocytokine family. As to quaternary structure, interacts with MIK2 (via extracellular leucine-rich repeat domain); this interaction triggers the formation of complex between MIK2 and the BAK1/SERK3 and SERK4 coreceptors, and subsequent BAK1 activation by phosphorylation. In terms of tissue distribution, mostly expressed in roots, and, to a lower extent, in seedlings shoots.

It is found in the cell membrane. The protein resides in the secreted. The protein localises to the extracellular space. Its subcellular location is the apoplast. Its function is as follows. Brassicaceae-specific phytocytokine (plant endogenous peptide released into the apoplast) perceived by MIK2 in a BAK1/SERK3 and SERK4 coreceptors-dependent manner, that modulates various physiological and antimicrobial processes including growth prevention and reactive oxygen species (ROS) response regulation. In Arabidopsis thaliana (Mouse-ear cress), this protein is Serine rich endogenous peptide 7.